The chain runs to 344 residues: Fructose-1,6-bisphosphatase class 1 (344 aa).

Positions 92, 115, 117, and 118 each coordinate Mg(2+). Residues 118–121 (DGSS), Asn-211, Tyr-244, and Lys-274 contribute to the substrate site. Residue Glu-280 coordinates Mg(2+).

The protein belongs to the FBPase class 1 family. Homotetramer. Mg(2+) serves as cofactor.

It localises to the cytoplasm. The enzyme catalyses beta-D-fructose 1,6-bisphosphate + H2O = beta-D-fructose 6-phosphate + phosphate. It functions in the pathway carbohydrate biosynthesis; gluconeogenesis. The polypeptide is Fructose-1,6-bisphosphatase class 1 (Aeromonas hydrophila subsp. hydrophila (strain ATCC 7966 / DSM 30187 / BCRC 13018 / CCUG 14551 / JCM 1027 / KCTC 2358 / NCIMB 9240 / NCTC 8049)).